Reading from the N-terminus, the 624-residue chain is Chaperone protein HtpG (624 aa).

Residues 1–336 (MKGQETRGFQ…SNDLPLNVSR (336 aa)) form an a; substrate-binding region. The b stretch occupies residues 337 to 552 (EILQDSTVTR…ADEMSTQMAK (216 aa)). A c region spans residues 553 to 624 (LFAAAGQSVP…IRRMNQLLVS (72 aa)).

It belongs to the heat shock protein 90 family. As to quaternary structure, homodimer. UMPylated on a histidine residue by YdiU under ATP-limited conditions.

Its subcellular location is the cytoplasm. UMPylation of the chaperone by YdiU negatively regulates its activity, facilitating Salmonella survival under ATP-limited conditions. Functionally, molecular chaperone. Has ATPase activity. The sequence is that of Chaperone protein HtpG from Salmonella typhimurium (strain LT2 / SGSC1412 / ATCC 700720).